A 100-amino-acid polypeptide reads, in one-letter code: Urease subunit gamma (100 aa).

This sequence belongs to the urease gamma subunit family. In terms of assembly, heterotrimer of UreA (gamma), UreB (beta) and UreC (alpha) subunits. Three heterotrimers associate to form the active enzyme.

The protein resides in the cytoplasm. The catalysed reaction is urea + 2 H2O + H(+) = hydrogencarbonate + 2 NH4(+). It participates in nitrogen metabolism; urea degradation; CO(2) and NH(3) from urea (urease route): step 1/1. The chain is Urease subunit gamma from Arthrobacter sp. (strain FB24).